The sequence spans 260 residues: Cytochrome c oxidase subunit 3 (260 aa).

The Mitochondrial matrix segment spans residues 1–15 (MTHQTHAYHMVNPSP). A helical membrane pass occupies residues 16–34 (WPLTGALSALLMTSGLAMW). Residues 35–40 (FHFNST) are Mitochondrial intermembrane-facing. The chain crosses the membrane as a helical span at residues 41-66 (ALLMIGLTTNMLTMYQWWRDIIREST). Topologically, residues 67–72 (FQGHHT) are mitochondrial matrix. Residues 73–105 (PAVQKGLRYGMILFIISEVLFFTGFFWAFYHSS) traverse the membrane as a helical segment. Residues 106 to 128 (LAPTPELGGCWPPTGIHPLNPLE) lie on the Mitochondrial intermembrane side of the membrane. Residues 129–152 (VPLLNTSVLLASGVSITWAHHSLM) traverse the membrane as a helical segment. Over 153–155 (EGD) the chain is Mitochondrial matrix. Residues 156–183 (RNHMLQALFITITLGVYFTLLQASEYYE) form a helical membrane-spanning segment. The Mitochondrial intermembrane portion of the chain corresponds to 184 to 190 (APFTISD). The helical transmembrane segment at 191–223 (GVYGSTFFVATGFHGLHVIIGSTFLIVCFFRQL) threads the bilayer. Over 224–232 (KFHFTSNHH) the chain is Mitochondrial matrix. A helical membrane pass occupies residues 233–256 (FGFEAAAWYWHFVDVVWLFLYVSI). Residues 257–260 (YWWG) lie on the Mitochondrial intermembrane side of the membrane.

The protein belongs to the cytochrome c oxidase subunit 3 family. In terms of assembly, component of the cytochrome c oxidase (complex IV, CIV), a multisubunit enzyme composed of 14 subunits. The complex is composed of a catalytic core of 3 subunits MT-CO1, MT-CO2 and MT-CO3, encoded in the mitochondrial DNA, and 11 supernumerary subunits COX4I, COX5A, COX5B, COX6A, COX6B, COX6C, COX7A, COX7B, COX7C, COX8 and NDUFA4, which are encoded in the nuclear genome. The complex exists as a monomer or a dimer and forms supercomplexes (SCs) in the inner mitochondrial membrane with NADH-ubiquinone oxidoreductase (complex I, CI) and ubiquinol-cytochrome c oxidoreductase (cytochrome b-c1 complex, complex III, CIII), resulting in different assemblies (supercomplex SCI(1)III(2)IV(1) and megacomplex MCI(2)III(2)IV(2)).

Its subcellular location is the mitochondrion inner membrane. It catalyses the reaction 4 Fe(II)-[cytochrome c] + O2 + 8 H(+)(in) = 4 Fe(III)-[cytochrome c] + 2 H2O + 4 H(+)(out). In terms of biological role, component of the cytochrome c oxidase, the last enzyme in the mitochondrial electron transport chain which drives oxidative phosphorylation. The respiratory chain contains 3 multisubunit complexes succinate dehydrogenase (complex II, CII), ubiquinol-cytochrome c oxidoreductase (cytochrome b-c1 complex, complex III, CIII) and cytochrome c oxidase (complex IV, CIV), that cooperate to transfer electrons derived from NADH and succinate to molecular oxygen, creating an electrochemical gradient over the inner membrane that drives transmembrane transport and the ATP synthase. Cytochrome c oxidase is the component of the respiratory chain that catalyzes the reduction of oxygen to water. Electrons originating from reduced cytochrome c in the intermembrane space (IMS) are transferred via the dinuclear copper A center (CU(A)) of subunit 2 and heme A of subunit 1 to the active site in subunit 1, a binuclear center (BNC) formed by heme A3 and copper B (CU(B)). The BNC reduces molecular oxygen to 2 water molecules using 4 electrons from cytochrome c in the IMS and 4 protons from the mitochondrial matrix. This is Cytochrome c oxidase subunit 3 (MT-CO3) from Bos mutus grunniens (Wild yak).